The sequence spans 579 residues: uncharacterized protein (579 aa).

The next 11 helical transmembrane spans lie at 13–35 (DLIK…IPWI), 39–61 (SISR…LLLN), 66–83 (ANGL…AFYF), 93–110 (AYWG…TYPL), 130–152 (LAIV…IEYL), 162–181 (IVPK…FFLI), 201–223 (LIVN…LYLA), 238–257 (YIIM…RLLL), 264–286 (GFYR…GIHT), 296–315 (IRVM…LFSM), and 324–346 (LFSL…YYLA).

The protein localises to the cell membrane. This is an uncharacterized protein from Pasteurella multocida (strain Pm70).